Consider the following 376-residue polypeptide: Putative phosphoserine aminotransferase (376 aa).

Arg50 contributes to the L-glutamate binding site. Pyridoxal 5'-phosphate contacts are provided by residues 84 to 85 (AT), Phe108, Thr154, Asp176, and Gln199. Lys200 carries the N6-(pyridoxal phosphate)lysine modification. 251 to 252 (NT) provides a ligand contact to pyridoxal 5'-phosphate.

This sequence belongs to the class-V pyridoxal-phosphate-dependent aminotransferase family. SerC subfamily. As to quaternary structure, homodimer. Requires pyridoxal 5'-phosphate as cofactor.

Its subcellular location is the cytoplasm. It catalyses the reaction O-phospho-L-serine + 2-oxoglutarate = 3-phosphooxypyruvate + L-glutamate. It carries out the reaction 4-(phosphooxy)-L-threonine + 2-oxoglutarate = (R)-3-hydroxy-2-oxo-4-phosphooxybutanoate + L-glutamate. It functions in the pathway amino-acid biosynthesis; L-serine biosynthesis; L-serine from 3-phospho-D-glycerate: step 2/3. It participates in cofactor biosynthesis; pyridoxine 5'-phosphate biosynthesis; pyridoxine 5'-phosphate from D-erythrose 4-phosphate: step 3/5. Its function is as follows. Catalyzes the reversible conversion of 3-phosphohydroxypyruvate to phosphoserine and of 3-hydroxy-2-oxo-4-phosphonooxybutanoate to phosphohydroxythreonine. This is Putative phosphoserine aminotransferase from Mycobacterium bovis (strain ATCC BAA-935 / AF2122/97).